The primary structure comprises 315 residues: 4-diphosphocytidyl-2-C-methyl-D-erythritol kinase (315 aa).

The active site involves Lys10. Residue 107-117 coordinates ATP; the sequence is PVAGGMAGGSA. Asp148 is an active-site residue. The segment at 292-315 is disordered; sequence HPATSPVPGPAKNRGAHIVSIESE.

It belongs to the GHMP kinase family. IspE subfamily.

It carries out the reaction 4-CDP-2-C-methyl-D-erythritol + ATP = 4-CDP-2-C-methyl-D-erythritol 2-phosphate + ADP + H(+). Its pathway is isoprenoid biosynthesis; isopentenyl diphosphate biosynthesis via DXP pathway; isopentenyl diphosphate from 1-deoxy-D-xylulose 5-phosphate: step 3/6. In terms of biological role, catalyzes the phosphorylation of the position 2 hydroxy group of 4-diphosphocytidyl-2C-methyl-D-erythritol. This is 4-diphosphocytidyl-2-C-methyl-D-erythritol kinase from Corynebacterium efficiens (strain DSM 44549 / YS-314 / AJ 12310 / JCM 11189 / NBRC 100395).